Here is a 364-residue protein sequence, read N- to C-terminus: Polygalacturonase (364 aa).

The first 21 residues, 1–21 (MVAYALTSMLLSAGALVAAAP), serve as a signal peptide directing secretion. The propeptide occupies 22–27 (SGLDAR). The cysteines at positions 30 and 45 are disulfide-linked. PbH1 repeat units follow at residues 158–188 (VTGL…DIGS), 189–210 (SSGI…AINS), 211–231 (GSDI…SIGS), 240–261 (VKGV…RIKT), 269–291 (VSDI…VIEQ), and 303–348 (TTGV…SITG). Aspartate 203 (proton donor) is an active-site residue. A disulfide bond links cysteine 205 and cysteine 221. Histidine 225 is an active-site residue. N-linked (GlcNAc...) asparagine glycosylation occurs at asparagine 276. A disulfide bridge links cysteine 331 with cysteine 336. The N-linked (GlcNAc...) asparagine glycan is linked to asparagine 340. A disulfide bond links cysteine 355 and cysteine 364.

It belongs to the glycosyl hydrolase 28 family.

The protein resides in the secreted. The catalysed reaction is (1,4-alpha-D-galacturonosyl)n+m + H2O = (1,4-alpha-D-galacturonosyl)n + (1,4-alpha-D-galacturonosyl)m.. Its function is as follows. Involved in maceration and soft-rotting of plant tissue. Hydrolyzes the 1,4-alpha glycosidic bonds of de-esterified pectate in the smooth region of the plant cell wall. This Cochliobolus carbonum (Maize leaf spot fungus) protein is Polygalacturonase (PGN1).